A 224-amino-acid chain; its full sequence is Large ribosomal subunit protein uL4 (224 aa).

The disordered stretch occupies residues 52–109 (AAARQGTHSTKTRGDVSGGGRKPYRQKGTGRARQGSTRAPQFTGGGVVHGPKPRDYSQ).

It belongs to the universal ribosomal protein uL4 family. In terms of assembly, part of the 50S ribosomal subunit.

Functionally, one of the primary rRNA binding proteins, this protein initially binds near the 5'-end of the 23S rRNA. It is important during the early stages of 50S assembly. It makes multiple contacts with different domains of the 23S rRNA in the assembled 50S subunit and ribosome. In terms of biological role, forms part of the polypeptide exit tunnel. The sequence is that of Large ribosomal subunit protein uL4 from Mycobacterium marinum (strain ATCC BAA-535 / M).